Consider the following 149-residue polypeptide: 3-hydroxyacyl-[acyl-carrier-protein] dehydratase FabZ (149 aa).

Residue histidine 49 is part of the active site.

Belongs to the thioester dehydratase family. FabZ subfamily.

Its subcellular location is the cytoplasm. It carries out the reaction a (3R)-hydroxyacyl-[ACP] = a (2E)-enoyl-[ACP] + H2O. Its function is as follows. Involved in unsaturated fatty acids biosynthesis. Catalyzes the dehydration of short chain beta-hydroxyacyl-ACPs and long chain saturated and unsaturated beta-hydroxyacyl-ACPs. The sequence is that of 3-hydroxyacyl-[acyl-carrier-protein] dehydratase FabZ from Sulfurimonas denitrificans (strain ATCC 33889 / DSM 1251) (Thiomicrospira denitrificans (strain ATCC 33889 / DSM 1251)).